An 860-amino-acid chain; its full sequence is Valine--tRNA ligase (860 aa).

A 'HIGH' region motif is present at residues 43–53 (PTVSGALHVGH). Positions 469-491 (LPVDPSSDAPTGYQESQRNQPGG) are disordered. Residues 574 to 578 (KMSKS) carry the 'KMSKS' region motif. Residue Lys-577 participates in ATP binding.

It belongs to the class-I aminoacyl-tRNA synthetase family. ValS type 2 subfamily. Monomer.

Its subcellular location is the cytoplasm. The catalysed reaction is tRNA(Val) + L-valine + ATP = L-valyl-tRNA(Val) + AMP + diphosphate. In terms of biological role, catalyzes the attachment of valine to tRNA(Val). As ValRS can inadvertently accommodate and process structurally similar amino acids such as threonine, to avoid such errors, it has a 'posttransfer' editing activity that hydrolyzes mischarged Thr-tRNA(Val) in a tRNA-dependent manner. This chain is Valine--tRNA ligase, found in Salinispora tropica (strain ATCC BAA-916 / DSM 44818 / JCM 13857 / NBRC 105044 / CNB-440).